The sequence spans 506 residues: uncharacterized protein (506 aa).

It to R.prowazekii RP789, RP027 and RP028.

This is an uncharacterized protein from Synechocystis sp. (strain ATCC 27184 / PCC 6803 / Kazusa).